The following is a 39-amino-acid chain: SDGRNVAAKAFHRIGRTIRDECCSNPACRVNNPHVCRRR.

Residues 1-17 (SDGRNVAAKAFHRIGRT) constitute a propeptide that is removed on maturation. 2 disulfide bridges follow: C22/C28 and C23/C36. The ser-Xaa-Pro motif, crucial for potent interaction with nAChR stretch occupies residues 24–26 (SNP). The residue at position 33 (P33) is a 4-hydroxyproline; in ArIA.

The protein belongs to the conotoxin A superfamily. As to expression, expressed by the venom duct.

The protein resides in the secreted. Its function is as follows. Alpha-conotoxins act on postsynaptic membranes, they bind to the nicotinic acetylcholine receptors (nAChR) and thus inhibit them. This toxin acts as a competitive inhibitor and is 3-fold more potent on alpha-7/CHRNA7 nAChRs (IC(50)=6 nM) than on alpha-3-beta-2/CHRNA3-CHRNB2 nAChR (IC(50)=18 nM). Functionally, acts as a competitive inhibitor and is 33-fold more potent on alpha-7/CHRNA7 nAChRs (IC(50)=1.8 nM) than on alpha-3-beta-2/CHRNA3-CHRNB2 nAChR (IC(50)=60.1 nM). In Conus arenatus (Sand-dusted cone), this protein is Alpha-conotoxin ArIA.